The primary structure comprises 207 residues: Ribosome maturation factor RimM (207 aa).

In terms of domain architecture, PRC barrel spans 114–207 (DDEYYWVDLI…RIDSDWPLDY (94 aa)).

Belongs to the RimM family. In terms of assembly, binds ribosomal protein uS19.

It localises to the cytoplasm. An accessory protein needed during the final step in the assembly of 30S ribosomal subunit, possibly for assembly of the head region. Essential for efficient processing of 16S rRNA. May be needed both before and after RbfA during the maturation of 16S rRNA. It has affinity for free ribosomal 30S subunits but not for 70S ribosomes. The protein is Ribosome maturation factor RimM of Bordetella pertussis (strain Tohama I / ATCC BAA-589 / NCTC 13251).